A 103-amino-acid chain; its full sequence is Large ribosomal subunit protein uL23 (103 aa).

The protein belongs to the universal ribosomal protein uL23 family. As to quaternary structure, part of the 50S ribosomal subunit. Contacts protein L29, and trigger factor when it is bound to the ribosome.

In terms of biological role, one of the early assembly proteins it binds 23S rRNA. One of the proteins that surrounds the polypeptide exit tunnel on the outside of the ribosome. Forms the main docking site for trigger factor binding to the ribosome. This Chlorobium phaeovibrioides (strain DSM 265 / 1930) (Prosthecochloris vibrioformis (strain DSM 265)) protein is Large ribosomal subunit protein uL23.